Consider the following 201-residue polypeptide: Holliday junction branch migration complex subunit RuvA (201 aa).

Positions 1–64 (MYEYIRGQFQ…EDFIGLYGFT (64 aa)) are domain I. The domain II stretch occupies residues 65 to 143 (TREELEMFKL…PDELTSEEGQ (79 aa)). A flexible linker region spans residues 144-152 (LIEGINDNS). A domain III region spans residues 153–201 (DYSFNINETLSALMALGYTEKEAQKALEKVDKTLSIENMIKESLKLLMR).

It belongs to the RuvA family. Homotetramer. Forms an RuvA(8)-RuvB(12)-Holliday junction (HJ) complex. HJ DNA is sandwiched between 2 RuvA tetramers; dsDNA enters through RuvA and exits via RuvB. An RuvB hexamer assembles on each DNA strand where it exits the tetramer. Each RuvB hexamer is contacted by two RuvA subunits (via domain III) on 2 adjacent RuvB subunits; this complex drives branch migration. In the full resolvosome a probable DNA-RuvA(4)-RuvB(12)-RuvC(2) complex forms which resolves the HJ.

The protein resides in the cytoplasm. The RuvA-RuvB-RuvC complex processes Holliday junction (HJ) DNA during genetic recombination and DNA repair, while the RuvA-RuvB complex plays an important role in the rescue of blocked DNA replication forks via replication fork reversal (RFR). RuvA specifically binds to HJ cruciform DNA, conferring on it an open structure. The RuvB hexamer acts as an ATP-dependent pump, pulling dsDNA into and through the RuvAB complex. HJ branch migration allows RuvC to scan DNA until it finds its consensus sequence, where it cleaves and resolves the cruciform DNA. In Clostridium perfringens (strain 13 / Type A), this protein is Holliday junction branch migration complex subunit RuvA.